Consider the following 368-residue polypeptide: 3-dehydroquinate synthase (368 aa).

NAD(+)-binding positions include 69-74 (DGEAYK), 103-107 (GVIGD), 127-128 (TT), K140, and K149. Positions 182, 245, and 262 each coordinate Zn(2+).

It belongs to the sugar phosphate cyclases superfamily. Dehydroquinate synthase family. NAD(+) is required as a cofactor. Co(2+) serves as cofactor. Requires Zn(2+) as cofactor.

It localises to the cytoplasm. It catalyses the reaction 7-phospho-2-dehydro-3-deoxy-D-arabino-heptonate = 3-dehydroquinate + phosphate. The protein operates within metabolic intermediate biosynthesis; chorismate biosynthesis; chorismate from D-erythrose 4-phosphate and phosphoenolpyruvate: step 2/7. Catalyzes the conversion of 3-deoxy-D-arabino-heptulosonate 7-phosphate (DAHP) to dehydroquinate (DHQ). The polypeptide is 3-dehydroquinate synthase (Pseudomonas aeruginosa (strain ATCC 15692 / DSM 22644 / CIP 104116 / JCM 14847 / LMG 12228 / 1C / PRS 101 / PAO1)).